Consider the following 120-residue polypeptide: Large ribosomal subunit protein uL22 (120 aa).

The protein belongs to the universal ribosomal protein uL22 family. In terms of assembly, part of the 50S ribosomal subunit.

This protein binds specifically to 23S rRNA; its binding is stimulated by other ribosomal proteins, e.g. L4, L17, and L20. It is important during the early stages of 50S assembly. It makes multiple contacts with different domains of the 23S rRNA in the assembled 50S subunit and ribosome. Its function is as follows. The globular domain of the protein is located near the polypeptide exit tunnel on the outside of the subunit, while an extended beta-hairpin is found that lines the wall of the exit tunnel in the center of the 70S ribosome. In Rippkaea orientalis (strain PCC 8801 / RF-1) (Cyanothece sp. (strain PCC 8801)), this protein is Large ribosomal subunit protein uL22.